A 416-amino-acid polypeptide reads, in one-letter code: Histidine--tRNA ligase (416 aa).

Belongs to the class-II aminoacyl-tRNA synthetase family. As to quaternary structure, homodimer.

The protein resides in the cytoplasm. The enzyme catalyses tRNA(His) + L-histidine + ATP = L-histidyl-tRNA(His) + AMP + diphosphate + H(+). This is Histidine--tRNA ligase from Clostridium novyi (strain NT).